We begin with the raw amino-acid sequence, 608 residues long: Elongation factor 4 (608 aa).

The 183-residue stretch at 11–193 folds into the tr-type G domain; it reads DHIRNFSIVA…AIVNRLPPPK (183 aa). Residues 23 to 28 and 140 to 143 contribute to the GTP site; these read DHGKST and NKID.

It belongs to the TRAFAC class translation factor GTPase superfamily. Classic translation factor GTPase family. LepA subfamily.

The protein localises to the cell inner membrane. It catalyses the reaction GTP + H2O = GDP + phosphate + H(+). Required for accurate and efficient protein synthesis under certain stress conditions. May act as a fidelity factor of the translation reaction, by catalyzing a one-codon backward translocation of tRNAs on improperly translocated ribosomes. Back-translocation proceeds from a post-translocation (POST) complex to a pre-translocation (PRE) complex, thus giving elongation factor G a second chance to translocate the tRNAs correctly. Binds to ribosomes in a GTP-dependent manner. The protein is Elongation factor 4 of Agrobacterium fabrum (strain C58 / ATCC 33970) (Agrobacterium tumefaciens (strain C58)).